An 84-amino-acid polypeptide reads, in one-letter code: MKVTLIAILTCAAVLVLHTTAAEELEESQLMEVGMPDTELAAVDEERLFECSVSCEIEKEGNKGCKKKKCKGGWKCKFNMCVKV.

The N-terminal stretch at 1–22 (MKVTLIAILTCAAVLVLHTTAA) is a signal peptide. The propeptide occupies 23-47 (EELEESQLMEVGMPDTELAAVDEER). 3 cysteine pairs are disulfide-bonded: cysteine 51–cysteine 65, cysteine 55–cysteine 76, and cysteine 70–cysteine 81.

It belongs to the neurotoxin 12 (Hwtx-2) family. 02 (Hwtx-2) subfamily. In terms of tissue distribution, expressed by the venom gland.

It is found in the secreted. Functionally, postsynaptic neurotoxin. The polypeptide is U4-theraphotoxin-Hhn1b (Cyriopagopus hainanus (Chinese bird spider)).